The primary structure comprises 2543 residues: Highly reducing polyketide synthase PKS2 (2543 aa).

Residues 4–425 (EPRIAVIGLS…GSNSAILLEG (422 aa)) form the Ketosynthase family 3 (KS3) domain. Residues Cys-174, His-309, and His-349 each act as for beta-ketoacyl synthase activity in the active site. The segment at 573-902 (VFTGQGAQHA…TYLPTLFRGT (330 aa)) is malonyl-CoA:ACP transacylase (MAT) domain. Residue Ser-662 is the For malonyltransferase activity of the active site. The segment at 969-1101 (HPLLGRKISP…GQIEAEMTDM (133 aa)) is N-terminal hotdog fold. A PKS/mFAS DH domain is found at 969–1281 (HPLLGRKISP…FRNIGSAEEV (313 aa)). A dehydratase (DH) domain region spans residues 969–1283 (HPLLGRKISP…NIGSAEEVID (315 aa)). Catalysis depends on His-1001, which acts as the Proton acceptor; for dehydratase activity. Residues 1119–1281 (TGLKEHDINA…FRNIGSAEEV (163 aa)) form a C-terminal hotdog fold region. Catalysis depends on Asp-1188, which acts as the Proton donor; for dehydratase activity. The interval 1438-1631 (SKVLGYLTEY…LPSRYGTDKP (194 aa)) is methyltransferase (CMet) domain. An enoylreductase (ER) domain region spans residues 1847 to 2159 (GSPDTIYFQR…SGEHMGKMVI (313 aa)). The interval 2184–2359 (ATYLVAGGTR…YTVSIALPVV (176 aa)) is ketoreductase (KR) domain. One can recognise a Carrier domain in the interval 2463–2540 (DPLIGLTEAM…ALATEILSQR (78 aa)). Ser-2500 is modified (O-(pantetheine 4'-phosphoryl)serine).

Its pathway is secondary metabolite biosynthesis. Functionally, highly reducing polyketide synthase; part of the gene cluster that mediates the biosynthesis of phomenoic acid, a long chain aliphatic carboxylic acid that does not appear to be essential for pathogenicity but may play a role in allowing to outcompete other fungi in the environmental niche via its antifungal properties. The polyketide synthase produces the long methylated aliphatic carboxylic acid chain of phomenoic acid. The cluster-specific cytochrome P450 monooxygenase may then hydroxylate the methyl group of carbon 31. The putative dehydrogenase YogA, which has no obvious role in phomenoic acid biosynthesis, may further modify phomenoic acid to produce a compound not identified yet. This chain is Highly reducing polyketide synthase PKS2, found in Leptosphaeria maculans (strain JN3 / isolate v23.1.3 / race Av1-4-5-6-7-8) (Blackleg fungus).